Consider the following 623-residue polypeptide: Vacuolar-sorting receptor 1 (623 aa).

Residues 1–22 (MKCWRLSAILFLGFMLTSLSTA) form the signal peptide. Residues 23-564 (RFVVEKNSLS…SKTASQAKST (542 aa)) are Lumenal-facing. Positions 54–163 (QYGGSMAGNV…SFGEKLKDAI (110 aa)) constitute a PA domain. N143 is a glycosylation site (N-linked (GlcNAc...) asparagine). 2 EGF-like domains span residues 411–461 (ETNE…TTCE) and 464–511 (GHGR…KNCE). 6 cysteine pairs are disulfide-bonded: C415-C433, C422-C442, C444-C460, C468-C488, C475-C496, and C498-C510. An EGF-like 3; calcium-binding domain is found at 512-554 (DIDECKDKKACQCPECSCKNTWGSYNCSCSGDLLYIKDQDTCI). N-linked (GlcNAc...) asparagine glycosylation is present at N537. A disulfide bridge connects residues C540 and C553. A helical transmembrane segment spans residues 565-585 (WAAFWVVLIALAMIAGGGFLV). The Cytoplasmic portion of the chain corresponds to 586–623 (YKYRIRQYMDSEIRAIMAQYMPLDSQEEGPNHVNHQRG). The short motif at 605-608 (YMPL) is the Tyrosine-based internalization motif element.

Belongs to the VSR (BP-80) family. In terms of assembly, interacts with the N-terminal propeptide of aleurein (proaleurein).

It is found in the membrane. Its subcellular location is the golgi apparatus membrane. The protein localises to the cytoplasmic vesicle. It localises to the clathrin-coated vesicle membrane. The protein resides in the prevacuolar compartment membrane. In terms of biological role, vacuolar-sorting receptor (VSR) involved in clathrin-coated vesicles sorting from Golgi apparatus to vacuoles. Seems to binds preferentially proteins containing a N-terminal NPIR motif. The polypeptide is Vacuolar-sorting receptor 1 (BP80) (Pisum sativum (Garden pea)).